Consider the following 163-residue polypeptide: Putative NOL1/NOP2/Sun domain family member 5B (163 aa).

The Nucleophile role is filled by cysteine 93.

This sequence belongs to the class I-like SAM-binding methyltransferase superfamily. RsmB/NOP family. Ubiquitous.

This is Putative NOL1/NOP2/Sun domain family member 5B (NSUN5P1) from Homo sapiens (Human).